A 92-amino-acid polypeptide reads, in one-letter code: Small ribosomal subunit protein uS19 (92 aa).

Belongs to the universal ribosomal protein uS19 family.

Protein S19 forms a complex with S13 that binds strongly to the 16S ribosomal RNA. This chain is Small ribosomal subunit protein uS19, found in Mesorhizobium japonicum (strain LMG 29417 / CECT 9101 / MAFF 303099) (Mesorhizobium loti (strain MAFF 303099)).